The sequence spans 148 residues: Putative cyclin-dependent kinase inhibitor SPL2 (148 aa).

Phosphoserine is present on residues S59 and S86.

Its subcellular location is the cytoplasmic granule. It is found in the cytoplasm. In terms of biological role, putative cyclin-dependent kinase (CDK) inhibitor necessary and sufficient for PHO pathway-dependent down-regulation of low-affinity phosphate transport. This chain is Putative cyclin-dependent kinase inhibitor SPL2 (SPL2), found in Saccharomyces cerevisiae (strain ATCC 204508 / S288c) (Baker's yeast).